We begin with the raw amino-acid sequence, 61 residues long: Small ribosomal subunit protein uS14 (61 aa).

Zn(2+)-binding residues include C24, C27, C40, and C43.

It belongs to the universal ribosomal protein uS14 family. Zinc-binding uS14 subfamily. As to quaternary structure, part of the 30S ribosomal subunit. Contacts proteins S3 and S10. The cofactor is Zn(2+).

Its function is as follows. Binds 16S rRNA, required for the assembly of 30S particles and may also be responsible for determining the conformation of the 16S rRNA at the A site. In Leptospira borgpetersenii serovar Hardjo-bovis (strain JB197), this protein is Small ribosomal subunit protein uS14.